A 1456-amino-acid polypeptide reads, in one-letter code: Macrophage mannose receptor 1 (1456 aa).

Residues 1–19 (MRLLLLLAFISVIPVSVQL) form the signal peptide. The Extracellular segment spans residues 20-1388 (LDARQFLIYN…DPQPKGSSKA (1369 aa)). The Ricin B-type lectin domain maps to 22–142 (ARQFLIYNED…SGLWSRWKVY (121 aa)). 7 disulfide bridges follow: C35–C49, C74–C91, C102–C149, C168–C194, C182–C209, C247–C340, and C316–C332. N104 carries N-linked (GlcNAc...) asparagine glycosylation. One can recognise a Fibronectin type-II domain in the interval 163-211 (ANGAVCAFPFKFENKWYADCTSAGRSDGWLWCGTTTDYDKDKLFGFCPL). The 117-residue stretch at 225-341 (LTGILYQINS…CVQKLGYICK (117 aa)) folds into the C-type lectin 1 domain. N344 is a glycosylation site (N-linked (GlcNAc...) asparagine). C-type lectin domains are found at residues 369 to 487 (YAGH…YICK), 511 to 626 (HGFY…FVCK), 655 to 778 (KTSM…WICQ), and 807 to 923 (YKDY…FICQ). 2 disulfide bridges follow: C391-C486 and C463-C478. An N-linked (GlcNAc...) asparagine glycan is attached at N529. 6 cysteine pairs are disulfide-bonded: C532–C625, C600–C617, C680–C777, C753–C769, C828–C922, and C899–C914. N-linked (GlcNAc...) asparagine glycosylation is found at N926 and N930. C-type lectin domains are found at residues 951 to 1079 (YKNK…YICQ), 1101 to 1212 (YGKS…FLCK), and 1240 to 1355 (FYGH…FICK). Intrachain disulfides connect C976-C1078, C1051-C1070, C1122-C1211, C1189-C1203, C1262-C1354, and C1331-C1346. An N-linked (GlcNAc...) asparagine glycan is attached at N1159. The N-linked (GlcNAc...) asparagine glycan is linked to N1204. Residues 1389–1409 (AGVVTVVLLIVIGAGVAAYFF) form a helical membrane-spanning segment. Topologically, residues 1410-1456 (YKKRHALHIPQEATFENTLYFNSNLSPGTSDTKDLMGNIEQNEHAII) are cytoplasmic.

As to expression, detected in macrophages.

The protein resides in the endosome membrane. The protein localises to the cell membrane. Its function is as follows. Mediates the endocytosis of glycoproteins by macrophages. Binds both sulfated and non-sulfated polysaccharide chains. Acts as phagocytic receptor for bacteria, fungi and other pathogens. The polypeptide is Macrophage mannose receptor 1 (Mrc1) (Mus musculus (Mouse)).